Consider the following 263-residue polypeptide: Lens fiber major intrinsic protein (263 aa).

Residues 1 to 9 are Cytoplasmic-facing; it reads MWEFRSFSF. The chain crosses the membrane as a helical span at residues 10–29; that stretch reads WRAVFAEFFGTMFYVFFGLG. Over 30–41 the chain is Extracellular; that stretch reads ASLKWAAGPANV. The helical transmembrane segment at 42–59 threads the bilayer; sequence LVIALAFGLVLATMVQSI. At 60–61 the chain is on the cytoplasmic side; it reads GH. An intramembrane region (discontinuously helical) is located at residues 62 to 77; the sequence is VSGAHINPAVTFAFLI. The NPA 1 signature appears at 68–70; sequence NPA. Residues 78-82 are Cytoplasmic-facing; sequence GSQMS. A helical transmembrane segment spans residues 83–106; sequence LFRAIFYIAAQLLGAVAGAAVLYG. Over 107-127 the chain is Extracellular; sequence VTPAAIRGNLALNTLHPGVSL. A helical transmembrane segment spans residues 128-148; the sequence is GQATTVEIFLTLQFVLCIFAT. At 149–156 the chain is on the cytoplasmic side; the sequence is YDERRNGR. The helical transmembrane segment at 157–175 threads the bilayer; that stretch reads LGSVSLAIGFSLTLGHLFG. The Extracellular segment spans residues 176–178; sequence LYY. The segment at residues 179 to 193 is an intramembrane region (discontinuously helical); sequence TGASMNPARSFAPAV. Positions 184 to 186 match the NPA 2 motif; the sequence is NPA. At 194–200 the chain is on the extracellular side; sequence LTRNFTN. The helical transmembrane segment at 201 to 222 threads the bilayer; that stretch reads HWVYWVGPIIGGALGGLVYDFI. Residues 223 to 263 are Cytoplasmic-facing; it reads LFPRMRGLSERLSILKGARPAEPEGQQEATGEPIELKTQSL. Residues 227-237 are interaction with CALM; the sequence is MRGLSERLSIL. The tract at residues 241–263 is disordered; that stretch reads RPAEPEGQQEATGEPIELKTQSL.

The protein belongs to the MIP/aquaporin (TC 1.A.8) family. As to quaternary structure, homotetramer; each monomer provides an independent water pore. Two homotetramers on opposing membranes can dimerize, forming a cell-cell junction. Interacts with CALM; the calcium-calmodulin/CALM complex interacts with the cytoplasmic domains of two aquaporins, leading to channel closure.

The protein localises to the cell membrane. It localises to the cell junction. The catalysed reaction is H2O(in) = H2O(out). Its activity is regulated as follows. The water channel activity is inhibited by calcium through calmodulin/CALM. In terms of biological role, aquaporins form homotetrameric transmembrane channels, with each monomer independently mediating water transport across the plasma membrane along its osmotic gradient. Specifically expressed in lens fiber cells, this aquaporin is crucial for maintaining lens water homeostasis and transparency. Beyond water permeability, it also acts as a cell-to-cell adhesion molecule, forming thin junctions between lens fiber cells that are essential for maintaining the ordered structure and transparency of the lens. In Lithobates pipiens (Northern leopard frog), this protein is Lens fiber major intrinsic protein.